The sequence spans 212 residues: Interleukin-6 (212 aa).

Positions 1-29 (MNSFSTSAFGPVAFSLGLLLVLPAAFPAP) are cleaved as a signal peptide. 2 disulfide bridges follow: C72-C78 and C101-C111. N-linked (GlcNAc...) asparagine glycosylation occurs at N73. Residue N172 is glycosylated (N-linked (GlcNAc...) asparagine).

It belongs to the IL-6 superfamily. As to quaternary structure, component of a hexamer of two molecules each of IL6, IL6R and IL6ST; first binds to IL6R to associate with the signaling subunit IL6ST. Interacts with IL6R (via the N-terminal ectodomain); this interaction may be affected by IL6R-binding with SORL1, hence decreasing IL6 cis signaling. Interacts with SORL1 (via the N-terminal ectodomain); this interaction leads to IL6 internalization and lysosomal degradation. May form a trimeric complex with the soluble SORL1 ectodomain and soluble IL6R receptor; this interaction might stabilize circulating IL6, hence promoting IL6 trans signaling.

It localises to the secreted. Cytokine with a wide variety of biological functions in immunity, tissue regeneration, and metabolism. Binds to IL6R, then the complex associates to the signaling subunit IL6ST/gp130 to trigger the intracellular IL6-signaling pathway. The interaction with the membrane-bound IL6R and IL6ST stimulates 'classic signaling', whereas the binding of IL6 and soluble IL6R to IL6ST stimulates 'trans-signaling'. Alternatively, 'cluster signaling' occurs when membrane-bound IL6:IL6R complexes on transmitter cells activate IL6ST receptors on neighboring receiver cells. Functionally, IL6 is a potent inducer of the acute phase response. Rapid production of IL6 contributes to host defense during infection and tissue injury, but excessive IL6 synthesis is involved in disease pathology. In the innate immune response, is synthesized by myeloid cells, such as macrophages and dendritic cells, upon recognition of pathogens through toll-like receptors (TLRs) at the site of infection or tissue injury. In the adaptive immune response, is required for the differentiation of B cells into immunoglobulin-secreting cells. Plays a major role in the differentiation of CD4(+) T cell subsets. Essential factor for the development of T follicular helper (Tfh) cells that are required for the induction of germinal-center formation. Required to drive naive CD4(+) T cells to the Th17 lineage. Also required for proliferation of myeloma cells and the survival of plasmablast cells. Its function is as follows. Acts as an essential factor in bone homeostasis and on vessels directly or indirectly by induction of VEGF, resulting in increased angiogenesis activity and vascular permeability. Induces, through 'trans-signaling' and synergistically with IL1B and TNF, the production of VEGF. Involved in metabolic controls, is discharged into the bloodstream after muscle contraction increasing lipolysis and improving insulin resistance. 'Trans-signaling' in central nervous system also regulates energy and glucose homeostasis. Mediates, through GLP-1, crosstalk between insulin-sensitive tissues, intestinal L cells and pancreatic islets to adapt to changes in insulin demand. Also acts as a myokine. Plays a protective role during liver injury, being required for maintenance of tissue regeneration. Also has a pivotal role in iron metabolism by regulating HAMP/hepcidin expression upon inflammation or bacterial infection. Through activation of IL6ST-YAP-NOTCH pathway, induces inflammation-induced epithelial regeneration. The chain is Interleukin-6 (IL6) from Cercocebus atys (Sooty mangabey).